The following is an 80-amino-acid chain: Translation initiation factor IF-1, chloroplastic (80 aa).

Residues 1–72 enclose the S1-like domain; the sequence is MKKQNLIDME…TKGRIIYRLR (72 aa).

The protein belongs to the IF-1 family. Component of the 30S ribosomal translation pre-initiation complex which assembles on the 30S ribosome in the order IF-2 and IF-3, IF-1 and N-formylmethionyl-tRNA(fMet); mRNA recruitment can occur at any time during PIC assembly.

The protein resides in the plastid. It localises to the chloroplast. Functionally, one of the essential components for the initiation of protein synthesis. Stabilizes the binding of IF-2 and IF-3 on the 30S subunit to which N-formylmethionyl-tRNA(fMet) subsequently binds. Helps modulate mRNA selection, yielding the 30S pre-initiation complex (PIC). Upon addition of the 50S ribosomal subunit IF-1, IF-2 and IF-3 are released leaving the mature 70S translation initiation complex. This Adiantum capillus-veneris (Maidenhair fern) protein is Translation initiation factor IF-1, chloroplastic.